A 98-amino-acid polypeptide reads, in one-letter code: NADH-ubiquinone oxidoreductase chain 4L (98 aa).

A run of 3 helical transmembrane segments spans residues Met1–Val21, Ser29–Leu49, and Ile61–Val81.

This sequence belongs to the complex I subunit 4L family. Core subunit of respiratory chain NADH dehydrogenase (Complex I) which is composed of 45 different subunits.

It is found in the mitochondrion inner membrane. It catalyses the reaction a ubiquinone + NADH + 5 H(+)(in) = a ubiquinol + NAD(+) + 4 H(+)(out). Core subunit of the mitochondrial membrane respiratory chain NADH dehydrogenase (Complex I) which catalyzes electron transfer from NADH through the respiratory chain, using ubiquinone as an electron acceptor. Part of the enzyme membrane arm which is embedded in the lipid bilayer and involved in proton translocation. In Vulpes vulpes (Red fox), this protein is NADH-ubiquinone oxidoreductase chain 4L (MT-ND4L).